The following is a 470-amino-acid chain: 6-phospho-beta-galactosidase 1 (470 aa).

D-galactose 6-phosphate contacts are provided by Gln-23, His-120, Asn-163, Glu-164, and Asn-300. The active-site Proton donor is Glu-164. The Nucleophile role is filled by Glu-378. Residues Ser-434, Trp-435, Lys-441, and Tyr-443 each contribute to the D-galactose 6-phosphate site.

This sequence belongs to the glycosyl hydrolase 1 family.

It catalyses the reaction a 6-phospho-beta-D-galactoside + H2O = D-galactose 6-phosphate + an alcohol. The protein operates within carbohydrate metabolism; lactose degradation; D-galactose 6-phosphate and beta-D-glucose from lactose 6-phosphate: step 1/1. This is 6-phospho-beta-galactosidase 1 from Streptococcus pneumoniae (strain ATCC BAA-255 / R6).